A 153-amino-acid chain; its full sequence is MADWFSSPLKTCTHVCDFPSLAGDPQQEIMCCDSMKNKLQDSRKVLLVSCSVSFNGSFYGGNRNVRGQLQISMVEDDGVCRPIGYVPIGGYLYHNDYGYYEGARTFNLDLESQYLKKDEDYNRKFLVSVFNENGLDSQCDLKVFIVHSIRIKV.

The protein belongs to the nanoviridae nuclear shuttle protein family.

It is found in the host nucleus. Its subcellular location is the host cytoplasm. Functionally, putative nuclear shuttle protein. The protein is Putative nuclear shuttle protein (DNA-N) of Cicer arietinum (Chickpea).